The primary structure comprises 358 residues: DNA replication and repair protein RecF (358 aa).

30–37 (GNNGSGKT) is an ATP binding site.

It belongs to the RecF family.

The protein localises to the cytoplasm. The RecF protein is involved in DNA metabolism; it is required for DNA replication and normal SOS inducibility. RecF binds preferentially to single-stranded, linear DNA. It also seems to bind ATP. This Actinobacillus succinogenes (strain ATCC 55618 / DSM 22257 / CCUG 43843 / 130Z) protein is DNA replication and repair protein RecF.